The primary structure comprises 376 residues: tRNA-specific 2-thiouridylase MnmA (376 aa).

Residues 16 to 23 (AMSGGVDS) and Leu-42 contribute to the ATP site. Cys-111 (nucleophile) is an active-site residue. Cys-111 and Cys-210 are joined by a disulfide. Position 135 (Gly-135) interacts with ATP. The tract at residues 158 to 160 (KDQ) is interaction with tRNA. The active-site Cysteine persulfide intermediate is Cys-210.

The protein belongs to the MnmA/TRMU family.

Its subcellular location is the cytoplasm. The enzyme catalyses S-sulfanyl-L-cysteinyl-[protein] + uridine(34) in tRNA + AH2 + ATP = 2-thiouridine(34) in tRNA + L-cysteinyl-[protein] + A + AMP + diphosphate + H(+). In terms of biological role, catalyzes the 2-thiolation of uridine at the wobble position (U34) of tRNA, leading to the formation of s(2)U34. This Streptomyces avermitilis (strain ATCC 31267 / DSM 46492 / JCM 5070 / NBRC 14893 / NCIMB 12804 / NRRL 8165 / MA-4680) protein is tRNA-specific 2-thiouridylase MnmA.